We begin with the raw amino-acid sequence, 613 residues long: DBH-like monooxygenase protein 1 (613 aa).

The signal sequence occupies residues 1 to 19; sequence MCGWPLLVLWALLPATAAG. Residues 20–587 are Lumenal-facing; it reads SPGRSYPHRV…PLVCEKAASP (568 aa). A DOMON domain is found at 35–148; sequence GKYWLHWGRQ…STVRVIWAYH (114 aa). Residue Asn114 is glycosylated (N-linked (GlcNAc...) asparagine). Residue Tyr203 is part of the active site. Disulfide bonds link Cys205/Cys257 and Cys242/Cys269. The Cu cation site is built by His235 and His236. Asn247 carries N-linked (GlcNAc...) asparagine glycosylation. Positions 307, 389, 391, and 464 each coordinate Cu cation. Intrachain disulfides connect Cys364–Cys480, Cys368–Cys550, and Cys443–Cys465. The active site involves His389. N-linked (GlcNAc...) asparagine glycosylation is found at Asn476 and Asn517. A helical transmembrane segment spans residues 588–608; sequence PLHGIFSLRLLTCALLLGSML.

It belongs to the copper type II ascorbate-dependent monooxygenase family. Requires Cu(2+) as cofactor. N-glycosylated. As to expression, broadly exprressed, with highest levels in salivary gland and ovary.

The protein resides in the endoplasmic reticulum membrane. The chain is DBH-like monooxygenase protein 1 (Moxd1) from Mus musculus (Mouse).